A 66-amino-acid chain; its full sequence is Beta-toxin Cbo2 (66 aa).

Residues 1-66 (KEGYIVNYHD…VWPLPKKTCN (66 aa)) form the LCN-type CS-alpha/beta domain. 4 disulfide bridges follow: C12-C65, C16-C41, C25-C46, and C29-C48. The residue at position 66 (N66) is an Asparagine amide.

This sequence belongs to the long (4 C-C) scorpion toxin superfamily. Sodium channel inhibitor family. Beta subfamily. Expressed by the venom gland.

The protein resides in the secreted. Its function is as follows. Beta toxins bind voltage-independently at site-4 of sodium channels and shift the voltage of activation toward more negative potentials thereby affecting sodium channel activation and promoting spontaneous and repetitive firing. A mixture of Cbo2 and Cbo3 is weakly active on the human voltage-gated sodium channels Nav1.4/SCN4A and Nav1.6/SCN8A when tested at 200 nM. In vivo, is toxic to mice when intraperitoneally injected. The sequence is that of Beta-toxin Cbo2 from Centruroides bonito (Scorpion).